The following is a 446-amino-acid chain: Tubulin alpha chain-like 3 (446 aa).

An MREC motif motif is present at residues 1-4 (MREC). 8 residues coordinate GTP: Gln-11, Glu-78, Ser-147, Gly-151, Thr-152, Thr-186, Asn-213, and Asn-235. Mg(2+) is bound at residue Glu-78. Glu-261 is an active-site residue.

Belongs to the tubulin family. As to quaternary structure, dimer of alpha and beta chains. A typical microtubule is a hollow water-filled tube with an outer diameter of 25 nm and an inner diameter of 15 nM. Alpha-beta heterodimers associate head-to-tail to form protofilaments running lengthwise along the microtubule wall with the beta-tubulin subunit facing the microtubule plus end conferring a structural polarity. Microtubules usually have 13 protofilaments but different protofilament numbers can be found in some organisms and specialized cells. Mg(2+) serves as cofactor. Some glutamate residues at the C-terminus are polyglycylated, resulting in polyglycine chains on the gamma-carboxyl group. Glycylation is mainly limited to tubulin incorporated into axonemes (cilia and flagella) whereas glutamylation is prevalent in neuronal cells, centrioles, axonemes, and the mitotic spindle. Both modifications can coexist on the same protein on adjacent residues, and lowering polyglycylation levels increases polyglutamylation, and reciprocally. Cilia and flagella glycylation is required for their stability and maintenance. Flagella glycylation controls sperm motility. Post-translationally, some glutamate residues at the C-terminus are polyglutamylated, resulting in polyglutamate chains on the gamma-carboxyl group. Polyglutamylation plays a key role in microtubule severing by spastin (SPAST). SPAST preferentially recognizes and acts on microtubules decorated with short polyglutamate tails: severing activity by SPAST increases as the number of glutamates per tubulin rises from one to eight, but decreases beyond this glutamylation threshold. Glutamylation is also involved in cilia motility.

The protein resides in the cytoplasm. Its subcellular location is the cytoskeleton. It catalyses the reaction GTP + H2O = GDP + phosphate + H(+). In terms of biological role, tubulin is the major constituent of microtubules, a cylinder consisting of laterally associated linear protofilaments composed of alpha- and beta-tubulin heterodimers. Microtubules grow by the addition of GTP-tubulin dimers to the microtubule end, where a stabilizing cap forms. Below the cap, tubulin dimers are in GDP-bound state, owing to GTPase activity of alpha-tubulin. The polypeptide is Tubulin alpha chain-like 3 (Tubal3) (Mus musculus (Mouse)).